A 282-amino-acid chain; its full sequence is Homeobox protein Hox-C12 (282 aa).

Disordered stretches follow at residues 94–129 (YYREPCAEGGGGGLKREERGRDPGAGPGAALLPLEP) and 147–214 (GGDG…NSRS). The segment covering 162 to 175 (SCQSLESDSSSSLL) has biased composition (low complexity). Positions 214 to 273 (SRKKRKPYSKLQLAELEGEFLVNEFITRQRRRELSDRLNLSDQQVKIWFQNRRMKKKRLL) form a DNA-binding region, homeobox.

The protein belongs to the Abd-B homeobox family.

It localises to the nucleus. Functionally, sequence-specific transcription factor which is part of a developmental regulatory system that provides cells with specific positional identities on the anterior-posterior axis. The protein is Homeobox protein Hox-C12 (HOXC12) of Homo sapiens (Human).